The following is a 417-amino-acid chain: NADH-quinone oxidoreductase subunit D (417 aa).

It belongs to the complex I 49 kDa subunit family. NDH-1 is composed of 14 different subunits. Subunits NuoB, C, D, E, F, and G constitute the peripheral sector of the complex.

It localises to the cell inner membrane. It carries out the reaction a quinone + NADH + 5 H(+)(in) = a quinol + NAD(+) + 4 H(+)(out). Functionally, NDH-1 shuttles electrons from NADH, via FMN and iron-sulfur (Fe-S) centers, to quinones in the respiratory chain. The immediate electron acceptor for the enzyme in this species is believed to be ubiquinone. Couples the redox reaction to proton translocation (for every two electrons transferred, four hydrogen ions are translocated across the cytoplasmic membrane), and thus conserves the redox energy in a proton gradient. The polypeptide is NADH-quinone oxidoreductase subunit D (Coxiella burnetii (strain Dugway 5J108-111)).